Consider the following 90-residue polypeptide: MLEELKEEEIVNKIGGRFKLSTLIQKRLVQLNQGSRALVSVDTHDKMSIVLQEIVQDKIFLNMENEIETVDDLDAIVAASEAPELDPSDL.

This sequence belongs to the RNA polymerase subunit omega family. The RNAP catalytic core consists of 2 alpha, 1 beta, 1 beta' and 1 omega subunit. When a sigma factor is associated with the core the holoenzyme is formed, which can initiate transcription.

It catalyses the reaction RNA(n) + a ribonucleoside 5'-triphosphate = RNA(n+1) + diphosphate. In terms of biological role, promotes RNA polymerase assembly. Latches the N- and C-terminal regions of the beta' subunit thereby facilitating its interaction with the beta and alpha subunits. In Rhodopirellula baltica (strain DSM 10527 / NCIMB 13988 / SH1), this protein is DNA-directed RNA polymerase subunit omega.